A 782-amino-acid polypeptide reads, in one-letter code: Phosphoribosylformylglycinamidine synthase subunit PurL (782 aa).

Histidine 48 is an active-site residue. Positions 51 and 90 each coordinate ATP. Glutamate 92 serves as a coordination point for Mg(2+). Residues 93 to 96 (SHNH) and arginine 115 each bind substrate. Histidine 94 functions as the Proton acceptor in the catalytic mechanism. Aspartate 116 provides a ligand contact to Mg(2+). Glutamine 239 serves as a coordination point for substrate. Residue aspartate 267 participates in Mg(2+) binding. Residue 311–313 (ESQ) participates in substrate binding. ATP contacts are provided by aspartate 525 and glycine 562. Asparagine 563 contacts Mg(2+). Residue serine 565 coordinates substrate.

This sequence belongs to the FGAMS family. In terms of assembly, monomer. Part of the FGAM synthase complex composed of 1 PurL, 1 PurQ and 2 PurS subunits.

It localises to the cytoplasm. The enzyme catalyses N(2)-formyl-N(1)-(5-phospho-beta-D-ribosyl)glycinamide + L-glutamine + ATP + H2O = 2-formamido-N(1)-(5-O-phospho-beta-D-ribosyl)acetamidine + L-glutamate + ADP + phosphate + H(+). The protein operates within purine metabolism; IMP biosynthesis via de novo pathway; 5-amino-1-(5-phospho-D-ribosyl)imidazole from N(2)-formyl-N(1)-(5-phospho-D-ribosyl)glycinamide: step 1/2. In terms of biological role, part of the phosphoribosylformylglycinamidine synthase complex involved in the purines biosynthetic pathway. Catalyzes the ATP-dependent conversion of formylglycinamide ribonucleotide (FGAR) and glutamine to yield formylglycinamidine ribonucleotide (FGAM) and glutamate. The FGAM synthase complex is composed of three subunits. PurQ produces an ammonia molecule by converting glutamine to glutamate. PurL transfers the ammonia molecule to FGAR to form FGAM in an ATP-dependent manner. PurS interacts with PurQ and PurL and is thought to assist in the transfer of the ammonia molecule from PurQ to PurL. The polypeptide is Phosphoribosylformylglycinamidine synthase subunit PurL (Nostoc sp. (strain PCC 7120 / SAG 25.82 / UTEX 2576)).